Reading from the N-terminus, the 488-residue chain is N-succinylglutamate 5-semialdehyde dehydrogenase (488 aa).

221–226 (GSSRTG) lines the NAD(+) pocket. Active-site residues include glutamate 244 and cysteine 278.

Belongs to the aldehyde dehydrogenase family. AstD subfamily.

The enzyme catalyses N-succinyl-L-glutamate 5-semialdehyde + NAD(+) + H2O = N-succinyl-L-glutamate + NADH + 2 H(+). Its pathway is amino-acid degradation; L-arginine degradation via AST pathway; L-glutamate and succinate from L-arginine: step 4/5. In terms of biological role, catalyzes the NAD-dependent reduction of succinylglutamate semialdehyde into succinylglutamate. This is N-succinylglutamate 5-semialdehyde dehydrogenase from Pseudomonas fluorescens (strain Pf0-1).